We begin with the raw amino-acid sequence, 474 residues long: Putative pectinesterase/pectinesterase inhibitor 38 (474 aa).

Positions 1-130 are pectinesterase inhibitor 38; the sequence is MVFGNEMCDE…HSLESITIDV (130 aa). An N-linked (GlcNAc...) asparagine glycan is attached at Asn80. The tract at residues 164 to 461 is pectinesterase 38; that stretch reads DVVVAQDGSG…TLPKFIDSAS (298 aa). 2 residues coordinate substrate: Thr241 and Gln271. The active-site Proton donor; for pectinesterase activity is Asp294. Cys308 and Cys328 are disulfide-bonded. Residue Asp315 is the Nucleophile; for pectinesterase activity of the active site. Asn351 carries N-linked (GlcNAc...) asparagine glycosylation. Positions 380 and 382 each coordinate substrate. Asn409 carries N-linked (GlcNAc...) asparagine glycosylation.

The protein in the N-terminal section; belongs to the PMEI family. It in the C-terminal section; belongs to the pectinesterase family.

The protein resides in the secreted. It localises to the cell wall. The catalysed reaction is [(1-&gt;4)-alpha-D-galacturonosyl methyl ester](n) + n H2O = [(1-&gt;4)-alpha-D-galacturonosyl](n) + n methanol + n H(+). It participates in glycan metabolism; pectin degradation; 2-dehydro-3-deoxy-D-gluconate from pectin: step 1/5. Its function is as follows. Acts in the modification of cell walls via demethylesterification of cell wall pectin. This Arabidopsis thaliana (Mouse-ear cress) protein is Putative pectinesterase/pectinesterase inhibitor 38 (PME38).